Reading from the N-terminus, the 419-residue chain is Histidine--tRNA ligase (419 aa).

Belongs to the class-II aminoacyl-tRNA synthetase family. In terms of assembly, homodimer.

Its subcellular location is the cytoplasm. The enzyme catalyses tRNA(His) + L-histidine + ATP = L-histidyl-tRNA(His) + AMP + diphosphate + H(+). The sequence is that of Histidine--tRNA ligase from Methylobacillus flagellatus (strain ATCC 51484 / DSM 6875 / VKM B-1610 / KT).